A 723-amino-acid chain; its full sequence is Protein Hook homolog (723 aa).

The region spanning 4–120 (TELCECLVQW…RLLQLILGCA (117 aa)) is the Calponin-homology (CH) domain. Coiled coils occupy residues 162–423 (VLPE…MQLQ) and 457–665 (EIKE…IVSA). The tract at residues 682–723 (LANGGPMQGGQSFLARQRQATSRRTTVSTTHPGHARSVNFVN) is disordered. Residues 696–711 (ARQRQATSRRTTVSTT) are compositionally biased toward low complexity.

The protein belongs to the hook family. In terms of assembly, interacts with microtubules.

The protein resides in the cytoplasm. The protein localises to the cytoskeleton. Functionally, may function to promote vesicle trafficking and/or fusion. May act to link a number of membrane-bound organelles to the cytoskeleton. This is Protein Hook homolog from Branchiostoma floridae (Florida lancelet).